The primary structure comprises 1509 residues: MVKQDPRDKSSYSPNLSIPINNQEEPTLNNNNNNNNNNNNNNNNNNNNNNNNNNNNNNNKNNNNNNIKHKDEENDFEDSIYQIAKEHEGEEDDEYFPIPLDELMPNHENDELTKKIKQTRPEDKTGLYVYCRNATYTVKHRENKKVKIKLLDDVSFFLRPKQMTLILGTPGCGKSTIFQMLAGQLKDKHFEGELLFNGHPINHKNHHRDISYVTQDDIHVPTLTVKETFRFALDCLGKKELTREEKQVSVDNCMKLLGLKHAENTLVGDNFIRGISGGQKKRVTIGVGVIKGSNLLLMDEPTSGLDSSTSFEILSDVKKFVTYGYSPALITLLQPSVQLTSLFDNLMIMSKGKICYFGPMNRALGYFKKLGFACPSHNNPAEFFQEVVDAPERYSFIHPPKCKTSDDFVKAYRESDIYLELMEKMDANKDGIVDDNKPKVLVDSTAKELGMYPHGIGYQTKICLKRGFIMISRNYYNFATRVFKGIFFGLLLGTLYWRIGHNQSGGMERFGLLFFIMTTIIFSSFAAVNSFFGERKVFYSQKALHYYKTGAYFISSIICDIPAGLIEVAFFGPIVYWLANLRPVFIRFVYFMILLFITDNLSLSFAKMCAAISPTIEIANVTASVILSIWLLFSGFTAPKNDIGGWWIWLYYISPYTWIFQGLSINEFTYQAYGCKDSELIPPRTPQNLLPYPEGFGGNQVCQYTSGEQIMDAFGINNPDYFKWIVYAILGAYIVFFYSVCFFALKYLNFEDKKSKLAVKKLKKKKKVIVCKEDEEPNCKVTTEALERVSDDNDDNADISNYDDDTVIDMKSPLTSPNYNNNNNLSGSGNNIKRRKVKTPSTLSPMVNSPLTNLSPMVNTPSKNGNHSKQKPISTSQKDISSETGSYLQFKKLCYAVDVKADDPDNPKKKKSQRLQLLTDIDGYVKPGQMLALMGPSGAGKSTLLDVLAQRKTGGHITGEILINGKPPSEFTNRIRAYVEQMDVLPPTQTVREAIAFSARCRLPPEVTKEEREIFVDKIVEVLSLSSIKDLKIGVLGNGLSVSQRKRVNIGVELASNPEILFLDEPTSGLDSGDAFKVIDVVNKIAKVMNRTVICTVHQPSAAIFEFFDQLLLLKKGGETIYFGPLGNQSSVILDYCDKLGMHIKPHINPADFVMTLADEGKMVEGPNGEQEHLDAKKAYFESNICKKEYEIMEGQLIPDDFVVKTYDSRFASSWMTQFRALCMRSWLSRLRRPAIFVSNCLRSILLAVLLGTLFVRMDYEQKDARSRVSLLFFSFLFAGMVAIGNIPTTVLERGVFYREVTAGFYHSTAYMISYVLTSYPFILSTGILYIIPTFWIAGLDSGRHSSKFWYCLFIFIITYIMYDAFALCLAVCLPNEVMASTICGIGLSLATLFGGFVIARPNYPSAYYWCHYLDWLRYPLEASCTNEFTGLTFVCTNNKGAVPIPIIENGVQIAIKYYCPITNGDDFMLTYGFHKFMRYIDIAAIFGYIFIFVGLSFWGFKKVRWLNR.

Residues 1–10 (MVKQDPRDKS) show a composition bias toward basic and acidic residues. Positions 1 to 70 (MVKQDPRDKS…NNNNNNIKHK (70 aa)) are disordered. Positions 11–28 (SYSPNLSIPINNQEEPTL) are enriched in polar residues. Positions 29–66 (NNNNNNNNNNNNNNNNNNNNNNNNNNNNNNNKNNNNNN) are enriched in low complexity. Positions 129–376 (VYCRNATYTV…FKKLGFACPS (248 aa)) constitute an ABC transporter 1 domain. 168-175 (GTPGCGKS) provides a ligand contact to ATP. The 277-residue stretch at 472–748 (SRNYYNFATR…SVCFFALKYL (277 aa)) folds into the ABC transmembrane type-2 1 domain. A run of 7 helical transmembrane segments spans residues 477–497 (NFATRVFKGIFFGLLLGTLYW), 512–532 (LLFFIMTTIIFSSFAAVNSFF), 557–577 (IICDIPAGLIEVAFFGPIVYW), 583–603 (PVFIRFVYFMILLFITDNLSL), 616–636 (IEIANVTASVILSIWLLFSGF), 643–663 (IGGWWIWLYYISPYTWIFQGL), and 725–745 (IVYAILGAYIVFFYSVCFFAL). The span at 813-831 (PLTSPNYNNNNNLSGSGNN) shows a compositional bias: low complexity. Positions 813–881 (PLTSPNYNNN…PISTSQKDIS (69 aa)) are disordered. The span at 839–881 (TPSTLSPMVNSPLTNLSPMVNTPSKNGNHSKQKPISTSQKDIS) shows a compositional bias: polar residues. An ABC transporter 2 domain is found at 888–1141 (LQFKKLCYAV…VILDYCDKLG (254 aa)). 935–942 (GPSGAGKS) lines the ATP pocket. Residues 1231-1504 (LRRPAIFVSN…GLSFWGFKKV (274 aa)) enclose the ABC transmembrane type-2 2 domain. 6 helical membrane passes run 1236 to 1256 (IFVSNCLRSILLAVLLGTLFV), 1271 to 1291 (LLFFSFLFAGMVAIGNIPTTV), 1320 to 1340 (YPFILSTGILYIIPTFWIAGL), 1352 to 1372 (CLFIFIITYIMYDAFALCLAV), 1379 to 1399 (MASTICGIGLSLATLFGGFVI), and 1481 to 1501 (IDIAAIFGYIFIFVGLSFWGF).

This sequence belongs to the ABC transporter superfamily. ABCG family. PDR (TC 3.A.1.205) subfamily.

Its subcellular location is the membrane. The sequence is that of ABC transporter G family member 5 (abcG5) from Dictyostelium discoideum (Social amoeba).